Reading from the N-terminus, the 179-residue chain is Large ribosomal subunit protein uL5 (179 aa).

The protein belongs to the universal ribosomal protein uL5 family. In terms of assembly, part of the 50S ribosomal subunit; part of the 5S rRNA/L5/L18/L25 subcomplex. Contacts the 5S rRNA and the P site tRNA. Forms a bridge to the 30S subunit in the 70S ribosome.

Functionally, this is one of the proteins that bind and probably mediate the attachment of the 5S RNA into the large ribosomal subunit, where it forms part of the central protuberance. In the 70S ribosome it contacts protein S13 of the 30S subunit (bridge B1b), connecting the 2 subunits; this bridge is implicated in subunit movement. Contacts the P site tRNA; the 5S rRNA and some of its associated proteins might help stabilize positioning of ribosome-bound tRNAs. This is Large ribosomal subunit protein uL5 from Citrobacter koseri (strain ATCC BAA-895 / CDC 4225-83 / SGSC4696).